The chain runs to 60 residues: Cytotoxin 8 (60 aa).

Cystine bridges form between cysteine 3/cysteine 21, cysteine 14/cysteine 38, cysteine 42/cysteine 53, and cysteine 54/cysteine 59.

The protein belongs to the three-finger toxin family. Short-chain subfamily. Type IA cytotoxin sub-subfamily. Monomer in solution; Homodimer and oligomer in the presence of negatively charged lipids forming a pore with a size ranging between 20 and 30 Angstroms. Expressed by the venom gland.

It localises to the secreted. The protein resides in the target cell membrane. Functionally, shows cytolytic activity on many different cells by forming pore in lipid membranes. In vivo, increases heart rate or kills the animal by cardiac arrest. In addition, it binds to heparin with high affinity, interacts with Kv channel-interacting protein 1 (KCNIP1) in a calcium-independent manner, and binds to integrin alpha-V/beta-3 (ITGAV/ITGB3) with moderate affinity. The protein is Cytotoxin 8 of Naja annulifera (Banded Egyptian cobra).